Consider the following 157-residue polypeptide: MPRRREVPKREILPDPKFGNVELSKFMNVIMESGKKAVAERIIYGALELIEKKHPDKDPLEAFTVAINNVKPMVEVKSRRVGGANYQVPVEVRPVRRLALSMRWIKEAARKRGEKSMAQRLANELLEATEGRGGAMKKRDEVHRMAEANKAFSHFRF.

The protein belongs to the universal ribosomal protein uS7 family. As to quaternary structure, part of the 30S ribosomal subunit. Contacts proteins S9 and S11.

One of the primary rRNA binding proteins, it binds directly to 16S rRNA where it nucleates assembly of the head domain of the 30S subunit. Is located at the subunit interface close to the decoding center, probably blocks exit of the E-site tRNA. In Verminephrobacter eiseniae (strain EF01-2), this protein is Small ribosomal subunit protein uS7.